The primary structure comprises 53 residues: UPF0391 membrane protein ESA_03375 (53 aa).

2 consecutive transmembrane segments (helical) span residues 4-24 (WGIIFLVIALIAAALGFGGLA) and 28-48 (AGAAKIVFVVGIILFLVSLFM).

Belongs to the UPF0391 family.

It is found in the cell membrane. This chain is UPF0391 membrane protein ESA_03375, found in Cronobacter sakazakii (strain ATCC BAA-894) (Enterobacter sakazakii).